The chain runs to 183 residues: Small ribosomal subunit protein bS16 (183 aa).

A compositionally biased stretch (basic and acidic residues) spans 149 to 161; that stretch reads EKKAAEAAAKAEA. A disordered region spans residues 149 to 183; sequence EKKAAEAAAKAEAEAANAPAEEAPAAEATEAPAEA. Residues 162–183 are compositionally biased toward low complexity; sequence EAANAPAEEAPAAEATEAPAEA.

The protein belongs to the bacterial ribosomal protein bS16 family.

The sequence is that of Small ribosomal subunit protein bS16 from Phocaeicola vulgatus (strain ATCC 8482 / DSM 1447 / JCM 5826 / CCUG 4940 / NBRC 14291 / NCTC 11154) (Bacteroides vulgatus).